The sequence spans 904 residues: Phosphoenolpyruvate carboxylase (904 aa).

A disordered region spans residues 52–71 (ISRRESDAPPSTLSEQLTGR). The segment covering 60–70 (PPSTLSEQLTG) has biased composition (polar residues). Catalysis depends on residues histidine 151 and lysine 570.

It belongs to the PEPCase type 1 family. Requires Mg(2+) as cofactor.

The enzyme catalyses oxaloacetate + phosphate = phosphoenolpyruvate + hydrogencarbonate. Functionally, forms oxaloacetate, a four-carbon dicarboxylic acid source for the tricarboxylic acid cycle. The polypeptide is Phosphoenolpyruvate carboxylase (Xanthomonas euvesicatoria pv. vesicatoria (strain 85-10) (Xanthomonas campestris pv. vesicatoria)).